We begin with the raw amino-acid sequence, 148 residues long: Large ribosomal subunit protein bL9 (148 aa).

The protein belongs to the bacterial ribosomal protein bL9 family.

Functionally, binds to the 23S rRNA. In Geobacter metallireducens (strain ATCC 53774 / DSM 7210 / GS-15), this protein is Large ribosomal subunit protein bL9.